The following is a 454-amino-acid chain: Allantoinase (454 aa).

6 residues coordinate Zn(2+): His58, His60, Lys149, His189, His245, and Asp318. Lys149 is subject to N6-carboxylysine.

It belongs to the metallo-dependent hydrolases superfamily. Allantoinase family. In terms of assembly, homotetramer. Zn(2+) serves as cofactor. Carboxylation allows a single lysine to coordinate two zinc ions.

It carries out the reaction (S)-allantoin + H2O = allantoate + H(+). The protein operates within nitrogen metabolism; (S)-allantoin degradation; allantoate from (S)-allantoin: step 1/1. In terms of biological role, catalyzes the conversion of allantoin (5-ureidohydantoin) to allantoic acid by hydrolytic cleavage of the five-member hydantoin ring. This chain is Allantoinase, found in Enterococcus faecalis (strain ATCC 700802 / V583).